Consider the following 331-residue polypeptide: Peroxidase 49 (331 aa).

Residues Met-1 to Cys-22 form the signal peptide. 4 disulfides stabilise this stretch: Cys-39–Cys-119, Cys-72–Cys-77, Cys-125–Cys-326, and Cys-204–Cys-236. The active-site Proton acceptor is the His-70. 5 residues coordinate Ca(2+): Asp-71, Val-74, Gly-76, Asp-78, and Ser-80. Position 167 (Pro-167) interacts with substrate. N-linked (GlcNAc...) asparagine glycosylation occurs at Asn-170. Residue His-197 coordinates heme b. Thr-198 is a Ca(2+) binding site. Residue Asn-213 is glycosylated (N-linked (GlcNAc...) asparagine). Ca(2+) contacts are provided by Asp-249, Ser-252, and Asp-257.

Belongs to the peroxidase family. Classical plant (class III) peroxidase subfamily. The cofactor is heme b. Ca(2+) is required as a cofactor.

Its subcellular location is the secreted. It carries out the reaction 2 a phenolic donor + H2O2 = 2 a phenolic radical donor + 2 H2O. In terms of biological role, removal of H(2)O(2), oxidation of toxic reductants, biosynthesis and degradation of lignin, suberization, auxin catabolism, response to environmental stresses such as wounding, pathogen attack and oxidative stress. These functions might be dependent on each isozyme/isoform in each plant tissue. The chain is Peroxidase 49 (PER49) from Arabidopsis thaliana (Mouse-ear cress).